A 385-amino-acid polypeptide reads, in one-letter code: Hemagglutinin-esterase (385 aa).

Residues 1 to 11 (MLIIFLFFNFC) form the signal peptide. An esterase domain 1 region spans residues 1–121 (MLIIFLFFNF…SNDVWIFNKV (121 aa)). Residues 12–361 (YGFNEPLNVV…LNCFYDPLPI (350 aa)) lie on the Virion surface side of the membrane. The Nucleophile role is filled by Ser-34. A disulfide bridge connects residues Cys-38 and Cys-59. Asn-83, Asn-110, Asn-145, Asn-171, Asn-196, and Asn-251 each carry an N-linked (GlcNAc...) asparagine; by host glycan. A disulfide bond links Cys-107 and Cys-155. Residues 122-239 (RFYRALYSNM…GSYKIFSTGF (118 aa)) form a receptor binding region. Cystine bridges form between Cys-183–Cys-249 and Cys-191–Cys-222. Residues 240-352 (VLSIPTKALC…NCPTSAYIKL (113 aa)) form an esterase domain 2 region. A disulfide bond links Cys-280 and Cys-285. N-linked (GlcNAc...) asparagine; by host glycosylation is present at Asn-289. Catalysis depends on charge relay system residues Asp-299 and His-302. Cys-320 and Cys-344 are joined by a disulfide. Asn-331 is a glycosylation site (N-linked (GlcNAc...) asparagine; by host). A helical transmembrane segment spans residues 362–382 (ILQGILLFLALLFIVFLLFLV). The Intravirion segment spans residues 383–385 (YHG).

Belongs to the influenza type C/coronaviruses hemagglutinin-esterase family. In terms of assembly, homodimer; disulfide-linked. Forms a complex with the M protein in the pre-Golgi. Associates then with S-M complex to form a ternary complex S-M-HE. N-glycosylated in the host RER.

It is found in the virion membrane. The protein resides in the host cell membrane. It catalyses the reaction N-acetyl-9-O-acetylneuraminate + H2O = N-acetylneuraminate + acetate + H(+). The catalysed reaction is N-acetyl-4-O-acetylneuraminate + H2O = N-acetylneuraminate + acetate + H(+). Structural protein that makes short spikes at the surface of the virus. Contains receptor binding and receptor-destroying activities. Mediates de-O-acetylation of N-acetyl-4-O-acetylneuraminic acid, which is probably the receptor determinant recognized by the virus on the surface of erythrocytes and susceptible cells. This receptor-destroying activity is important for virus release as it probably helps preventing self-aggregation and ensures the efficient spread of the progeny virus from cell to cell. May serve as a secondary viral attachment protein for initiating infection, the spike protein being the major one. May become a target for both the humoral and the cellular branches of the immune system. The sequence is that of Hemagglutinin-esterase from Human coronavirus HKU1 (isolate N2) (HCoV-HKU1).